We begin with the raw amino-acid sequence, 422 residues long: Glucose-1-phosphate adenylyltransferase (422 aa).

Alpha-D-glucose 1-phosphate is bound by residues tyrosine 110, glycine 175, 190-191 (EK), and serine 208.

Belongs to the bacterial/plant glucose-1-phosphate adenylyltransferase family. As to quaternary structure, homotetramer.

The catalysed reaction is alpha-D-glucose 1-phosphate + ATP + H(+) = ADP-alpha-D-glucose + diphosphate. Its pathway is glycan biosynthesis; glycogen biosynthesis. In terms of biological role, involved in the biosynthesis of ADP-glucose, a building block required for the elongation reactions to produce glycogen. Catalyzes the reaction between ATP and alpha-D-glucose 1-phosphate (G1P) to produce pyrophosphate and ADP-Glc. The sequence is that of Glucose-1-phosphate adenylyltransferase from Hydrogenovibrio crunogenus (strain DSM 25203 / XCL-2) (Thiomicrospira crunogena).